Reading from the N-terminus, the 415-residue chain is MIKMFIISKNHLDIIYNFVDWEFKNISSIGNIINDEVVWNELPKGVEGVLCGVDGSRGKVEFCSGIVYGLSSYAIGKNIEKGMFELGVLPFFKEEDRVRRLMMTLEYRLATLVSKNVDLILLDGTLSGALIMPPLLSGDTNPLTVYPDLAEDLGWKFIKSLDNFWDEVLENLDGNIYDNTLLAIKIFQKFDSTYSEYVEDIREELFAANILNSRLEIACWGVYFEYIELLHSLNRLLEYDCTFIAKNFENSIITEKLKENNINVDILLDATLLNQIFRGRGYTTLKLEDCYNKKRSRRHINKICDVFGDYFKFLEVIRENPFEMIPKTYVRFAESSPILALEVPRTNKKSIEEVISLLIPYSKLGYPRYLKDAHNKAKISKKEFKKQILFMIKYISEKNRDFSLFFQSGREVLGE.

This is an uncharacterized protein from Methanocaldococcus jannaschii (strain ATCC 43067 / DSM 2661 / JAL-1 / JCM 10045 / NBRC 100440) (Methanococcus jannaschii).